Reading from the N-terminus, the 1464-residue chain is Glutamate receptor ionotropic, NMDA 2A (1464 aa).

Residues M1–A22 form the signal peptide. The Extracellular portion of the chain corresponds to P23–S556. H44 provides a ligand contact to Zn(2+). N-linked (GlcNAc...) asparagine glycosylation occurs at N75. C87 and C320 are joined by a disulfide. Positions 128, 266, and 282 each coordinate Zn(2+). N340, N380, N443, and N444 each carry an N-linked (GlcNAc...) asparagine glycan. 2 disulfides stabilise this stretch: C429–C455 and C436–C456. The L-glutamate site is built by S511, T513, and R518. N-linked (GlcNAc...) asparagine glycosylation is present at N541. The chain crosses the membrane as a helical span at residues V557–F576. At E577 to T600 the chain is on the cytoplasmic side. A pore-forming region spans residues F599–Q620. Residues I601–N615 constitute an intramembrane region (discontinuously helical). Over S616 to T625 the chain is Cytoplasmic. The helical transmembrane segment at T626–T646 threads the bilayer. At A647–I814 the chain is on the extracellular side. N687 is a glycosylation site (N-linked (GlcNAc...) asparagine). S689, T690, and D731 together coordinate L-glutamate. The cysteines at positions 745 and 800 are disulfide-linked. The chain crosses the membrane as a helical span at residues D815–F835. Residues I836–V1464 are Cytoplasmic-facing. Phosphoserine is present on residues S882, S890, and S929. 2 stretches are compositionally biased toward polar residues: residues E997–P1010 and Q1023–S1032. The tract at residues E997 to K1083 is disordered. S1025 carries the phosphoserine modification. Basic and acidic residues-rich tracts occupy residues Q1033–T1043 and L1052–I1061. Residues S1059 and S1062 each carry the phosphoserine modification. Over residues C1070–K1083 the composition is skewed to basic and acidic residues. Phosphoserine is present on residues S1198 and S1291. The interval K1335–R1372 is disordered. Positions S1462–V1464 match the PDZ-binding motif.

This sequence belongs to the glutamate-gated ion channel (TC 1.A.10.1) family. NR2A/GRIN2A subfamily. Heterotetramer. Forms heterotetrameric channels composed of two GluN1/zeta subunits (GRIN1), and two identical GluN2/epsilon subunits (GRIN2A, GRIN2B, GRIN2C or GRIN2D) or GluN3 subunits (GRIN3A or GRIN3B) (in vitro). Can also form heterotetrameric channels that contain at least two GluN1 subunits and at least two different GluN2 subunits (or a combination of one GluN2 and one GluN3 subunits) (in vitro). In vivo, the subunit composition may depend on the expression levels of the different subunits. Found in a complex with GRIN1, GRIN3A and PPP2CB. Found in a complex with GRIN1 and GRIN3B. Interacts with AIP1. Interacts with HIP1 and NETO1. Interacts with SNX27 (via PDZ domain); the interaction is required for recycling to the plasma membrane when endocytosed and prevent degradation in lysosomes. Interacts with PDZ domains of PATJ and DLG4. Interacts with LRFN2. Interacts with RPH3A and DLG4; this ternary complex regulates NMDA receptor composition at postsynaptic membranes. Interacts with SORCS2. Interacts with ARC; preventing ARC oligomerization. Interacts (via the extreme C-terminus) with FRMPD2 (the second PDZ domain); the interaction is direct and is likely to promote NMDAR-mediated neural signal transmission. GRIN2A binds FRMPD2 with lower affinity than GRIN2B.

Its subcellular location is the cell projection. The protein resides in the dendritic spine. It is found in the cell membrane. The protein localises to the synapse. It localises to the postsynaptic cell membrane. Its subcellular location is the cytoplasmic vesicle membrane. The enzyme catalyses Ca(2+)(in) = Ca(2+)(out). It carries out the reaction Na(+)(in) = Na(+)(out). It catalyses the reaction K(+)(in) = K(+)(out). NMDA glutamate receptor activity is inhibited by endogenous Mg(2+) in a voltage-dependent manner. NMDA glutamate receptor activity is inhibited by endogenous Zn(2+). NMDA glutamate receptor activity is inhibited by endogenous protons. Component of N-methyl-D-aspartate (NMDA) receptors (NMDARs) that function as heterotetrameric, ligand-gated cation channels with high calcium permeability and voltage-dependent block by Mg(2+). NMDARs participate in synaptic plasticity for learning and memory formation by contributing to the slow phase of excitatory postsynaptic current, long-term synaptic potentiation, and learning. Channel activation requires binding of the neurotransmitter L-glutamate to the GluN2 subunit, glycine or D-serine binding to the GluN1 subunit, plus membrane depolarization to eliminate channel inhibition by Mg(2+). NMDARs mediate simultaneously the potasium efflux and the influx of calcium and sodium. Each GluN2 subunit confers differential attributes to channel properties, including activation, deactivation and desensitization kinetics, pH sensitivity, Ca2(+) permeability, and binding to allosteric modulators. Participates in the synaptic plasticity regulation through activation by the L-glutamate releaseed by BEST1, into the synaptic cleft, upon F2R/PAR-1 activation in astrocyte. In Homo sapiens (Human), this protein is Glutamate receptor ionotropic, NMDA 2A.